A 1086-amino-acid polypeptide reads, in one-letter code: Ribonuclease 3 (1086 aa).

2 disordered regions span residues 1-77 (MSDE…DSPR) and 158-233 (CHSM…LRNF). Over residues 13 to 23 (PKHKRARRKKY) the composition is skewed to basic residues. Residues 24–35 (QKEYQERHKEEM) are compositionally biased toward basic and acidic residues. The segment covering 43-53 (FQNQPSTSSAP) has biased composition (polar residues). Residues 159 to 168 (HSMKGRKTPK) are compositionally biased toward basic residues. A compositionally biased stretch (acidic residues) spans 181–190 (VSDDSNDSQD). A compositionally biased stretch (polar residues) spans 191 to 201 (EASTSEPTNRQ). The span at 203–217 (PEADKTGEVKDEKQT) shows a compositional bias: basic and acidic residues. 2 RNase III domains span residues 607 to 781 (LDVF…LDGG) and 833 to 957 (FHAL…VDRG). Mg(2+)-binding residues include Glu694, Asn767, Glu770, Glu873, Asp943, and Glu946. Positions 984–1059 (DAKSHLQQWC…AELALANLES (76 aa)) constitute a DRBM domain.

Belongs to the ribonuclease III family. Mg(2+) is required as a cofactor. It depends on Mn(2+) as a cofactor.

The protein localises to the nucleus. It catalyses the reaction Endonucleolytic cleavage to 5'-phosphomonoester.. Executes the initial step of microRNA (miRNA) processing in the nucleus, that is the cleavage of pri-miRNA to release pre-miRNA. Involved in pre-rRNA processing. Cleaves double-strand RNA and does not cleave single-strand RNA. Involved in fertility. Required for the function or synthesis of the let-7 miRNA. The polypeptide is Ribonuclease 3 (drsh-1) (Caenorhabditis elegans).